A 654-amino-acid polypeptide reads, in one-letter code: Pheromone-processing carboxypeptidase KEX1 (654 aa).

Residues 1 to 18 form the signal peptide; sequence MIVRLFWLAVLWLALANA. Over 19–533 the chain is Lumenal; the sequence is NPLKRLNHVW…TESHATRIVR (515 aa). N-linked (GlcNAc...) asparagine glycosylation is found at N69 and N89. Residues S188 and D395 contribute to the active site. A glycan (N-linked (GlcNAc...) asparagine) is linked at N442. H453 is a catalytic residue. The span at 484-500 shows a compositional bias: polar residues; it reads QAKKTNANQNDSPSASE. Positions 484-526 are disordered; it reads QAKKTNANQNDSPSASENDNESGRTSESASSSPSESAATETES. N503 carries an N-linked (GlcNAc...) asparagine glycan. Low complexity predominate over residues 508–523; the sequence is TSESASSSPSESAATE. Residues 534 to 554 form a helical membrane-spanning segment; the sequence is LIQLAVIIILIWGLCAIYSTY. At 555 to 654 the chain is on the cytoplasmic side; it reads RSKPTSIIKT…ENAHEHTEEH (100 aa). Residues 606-654 form a disordered region; sequence PVDIELGPTDGMDDASSDSGPSNVGTAETPEFVIASDDEENAHEHTEEH. Residues 622–631 show a composition bias toward polar residues; that stretch reads SDSGPSNVGT.

Belongs to the peptidase S10 family.

It localises to the golgi apparatus. It is found in the trans-Golgi network membrane. The catalysed reaction is Preferential release of a C-terminal arginine or lysine residue.. Functionally, protease with a carboxypeptidase B-like function involved in the C-terminal processing of the lysine and arginine residues from protein precursors. Promotes cell fusion and is involved in the programmed cell death. This Clavispora lusitaniae (strain ATCC 42720) (Yeast) protein is Pheromone-processing carboxypeptidase KEX1 (KEX1).